The chain runs to 285 residues: Enterobactin synthase component B (285 aa).

Residues 2–213 are isochorismatase; sequence AIPKLQAYAL…EELLPAPIPA (212 aa). Residues 209-284 form the Carrier domain; sequence APIPASKAAL…AWWKLLSREV (76 aa). Residues aspartate 227, glycine 242, and aspartate 244 each contribute to the Mg(2+) site. Serine 245 bears the O-(pantetheine 4'-phosphoryl)serine mark.

It in the N-terminal section; belongs to the isochorismatase family. As to quaternary structure, proteins EntB, EntD, EntE, and EntF form a multienzyme complex called enterobactin synthase. Homodimer. Also forms a specific pairwise interaction with EntC; this interaction likely facilitates substrate channeling to connect the EntB and EntC active sites. Requires Mg(2+) as cofactor. Post-translationally, 4'-phosphopantetheine is transferred from CoA to a specific serine of apo-EntB by EntD. Holo-EntB so formed is then acylated with 2,3-dihydroxybenzoate in a reaction catalyzed by EntE.

It localises to the cytoplasm. It carries out the reaction 3 2,3-dihydroxybenzoate + 3 L-serine + 6 ATP = enterobactin + 6 AMP + 6 diphosphate + 4 H(+). It catalyses the reaction isochorismate + H2O = (2S,3S)-2,3-dihydroxy-2,3-dihydrobenzoate + pyruvate. It participates in siderophore biosynthesis; enterobactin biosynthesis. In terms of biological role, involved in the biosynthesis of the siderophore enterobactin (enterochelin), which is a macrocyclic trimeric lactone of N-(2,3-dihydroxybenzoyl)-serine. The serine trilactone serves as a scaffolding for the three catechol functionalities that provide hexadentate coordination for the tightly ligated iron(3+) atoms. EntB is a bifunctional protein that serves as an isochorismate lyase and an aryl carrier protein (ArCP). Catalyzes the conversion of isochorismate to 2,3-dihydro-2,3-dihydroxybenzoate (2,3-diDHB), the precursor of 2,3-dihydroxybenzoate (DHB). In the enterobactin assembly, EntB functions as an aryl carrier protein phosphopantetheinylated near the C terminus by EntD to yield holo-EntB, which is then acylated by EntE with 2,3-dihydroxybenzoyl-AMP to form DHB-holo-EntB. Then this product will serve in the formation of the amide bond between 2,3-dihydroxybenzoate (DHB) and L-serine. This chain is Enterobactin synthase component B, found in Escherichia coli O157:H7.